The chain runs to 297 residues: Probable endonuclease 4 (297 aa).

Residues His69, His110, Glu145, Asp179, His182, His214, Asp227, His229, and Glu259 each coordinate Zn(2+).

This sequence belongs to the AP endonuclease 2 family. Zn(2+) is required as a cofactor.

The catalysed reaction is Endonucleolytic cleavage to 5'-phosphooligonucleotide end-products.. Endonuclease IV plays a role in DNA repair. It cleaves phosphodiester bonds at apurinic or apyrimidinic (AP) sites, generating a 3'-hydroxyl group and a 5'-terminal sugar phosphate. The polypeptide is Probable endonuclease 4 (Listeria monocytogenes serotype 4b (strain F2365)).